A 465-amino-acid chain; its full sequence is Putative ABC transporter ATP-binding protein MG065 homolog (465 aa).

The region spanning I232–I465 is the ABC transporter domain. G268–T275 contacts ATP.

It belongs to the ABC transporter superfamily.

This is Putative ABC transporter ATP-binding protein MG065 homolog from Mycoplasma pneumoniae (strain ATCC 29342 / M129 / Subtype 1) (Mycoplasmoides pneumoniae).